The sequence spans 62 residues: Kininogen-1 (62 aa).

The first 22 residues, 1-22 (MDILKKSLFLVLFLGLVSFSIC), serve as a signal peptide directing secretion. Residues 24–62 (EEKRDTEEEENDDEIEEESEEKKREAPERPPGFTPFRIY) form a disordered region. The segment covering 30-42 (EEEENDDEIEEES) has biased composition (acidic residues). Pro54 carries the 4-hydroxyproline; partial modification. At Tyr62 the chain carries Sulfotyrosine.

The protein belongs to the frog skin active peptide (FSAP) family. Bradykinin-related peptide subfamily. Expressed by the skin glands.

It is found in the secreted. Inhibits ACE with a Ki of 1.6 uM, and targets B2 bradykinin receptor (BDKRB2). Provokes contraction of smooth muscle preparation (ileum). In vivo, induces an early hyperalgesic effects in living rats after intraplantar injection. This chain is Kininogen-1, found in Phyllomedusa sauvagei (Sauvage's leaf frog).